A 513-amino-acid polypeptide reads, in one-letter code: ATP synthase subunit alpha (513 aa).

171–178 (GDRQIGKT) provides a ligand contact to ATP.

Belongs to the ATPase alpha/beta chains family. In terms of assembly, F-type ATPases have 2 components, CF(1) - the catalytic core - and CF(0) - the membrane proton channel. CF(1) has five subunits: alpha(3), beta(3), gamma(1), delta(1), epsilon(1). CF(0) has three main subunits: a(1), b(2) and c(9-12). The alpha and beta chains form an alternating ring which encloses part of the gamma chain. CF(1) is attached to CF(0) by a central stalk formed by the gamma and epsilon chains, while a peripheral stalk is formed by the delta and b chains.

It localises to the cell inner membrane. It carries out the reaction ATP + H2O + 4 H(+)(in) = ADP + phosphate + 5 H(+)(out). In terms of biological role, produces ATP from ADP in the presence of a proton gradient across the membrane. The alpha chain is a regulatory subunit. The chain is ATP synthase subunit alpha from Wolbachia sp. subsp. Drosophila simulans (strain wRi).